The primary structure comprises 865 residues: Fanconi-associated nuclease 1 homolog (865 aa).

A UBZ4-type zinc finger spans residues 35 to 62 (GKICPLCETKFSLASYKSHMNTCNVADD). Zn(2+) contacts are provided by cysteine 38, cysteine 41, histidine 53, and cysteine 57. Disordered regions lie at residues 90 to 140 (DASF…SLDV) and 162 to 187 (RRSS…PVKK). Composition is skewed to basic and acidic residues over residues 93–112 (FSDK…REVP) and 174–187 (DQAD…PVKK). Mn(2+)-binding residues include glutamate 682, aspartate 810, glutamate 825, and valine 826. The VRR-NUC domain occupies 744 to 857 (QELIEENIRK…GIRAEVCHVA (114 aa)).

The protein belongs to the FAN1 family. Requires Mn(2+) as cofactor. The cofactor is Mg(2+).

Its subcellular location is the nucleus. The enzyme catalyses Hydrolytically removes 5'-nucleotides successively from the 3'-hydroxy termini of 3'-hydroxy-terminated oligonucleotides.. Functionally, nuclease required for the repair of DNA interstrand cross-links (ICL). Acts as a 5'-3' exonuclease that anchors at a cut end of DNA and cleaves DNA successively at every third nucleotide, allowing to excise an ICL from one strand through flanking incisions. The chain is Fanconi-associated nuclease 1 homolog (fan-1) from Caenorhabditis elegans.